The following is a 61-amino-acid chain: Conotoxin LiC32 (61 aa).

Positions 1 to 22 are cleaved as a signal peptide; it reads MRCVPVFIILLLLSPSAPSVDA. A propeptide spanning residues 23 to 44 is cleaved from the precursor; sequence HPKTKDDVPLASFHDDAKRTLQ. The residue at position 60 (cysteine 60) is a Cysteine amide.

This sequence belongs to the conotoxin T superfamily. Contains 2 disulfide bonds that can be either 'C1-C3, C2-C4' or 'C1-C4, C2-C3', since these disulfide connectivities have been observed for conotoxins with cysteine framework V (for examples, see AC P0DQQ7 and AC P81755). Expressed by the venom duct.

Its subcellular location is the secreted. Functionally, has the ability to interact with the G-protein coupled somatostatin type 3 receptor (SSTR3). The ability was measured in competition binding experiments and the constant of inhibition (Ki) has been evaluated to be 3.5 uM. This is Conotoxin LiC32 from Conus lividus (Livid cone).